We begin with the raw amino-acid sequence, 235 residues long: Small ribosomal subunit protein uS2 (235 aa).

The protein belongs to the universal ribosomal protein uS2 family.

This Geobacillus stearothermophilus (Bacillus stearothermophilus) protein is Small ribosomal subunit protein uS2 (rpsB).